The chain runs to 229 residues: Peptidase E (229 aa).

Catalysis depends on charge relay system residues Ser120, Asp135, and His157.

It belongs to the peptidase S51 family.

It localises to the cytoplasm. It carries out the reaction Dipeptidase E catalyzes the hydrolysis of dipeptides Asp-|-Xaa. It does not act on peptides with N-terminal Glu, Asn or Gln, nor does it cleave isoaspartyl peptides.. Functionally, hydrolyzes dipeptides containing N-terminal aspartate residues. May play a role in allowing the cell to use peptide aspartate to spare carbon otherwise required for the synthesis of the aspartate family of amino acids. This chain is Peptidase E (pepE), found in Salmonella typhimurium (strain LT2 / SGSC1412 / ATCC 700720).